The primary structure comprises 227 residues: 7-cyano-7-deazaguanine synthase (227 aa).

Residue 8 to 18 (LSGGTDSATVL) coordinates ATP. Residues Cys-192, Cys-202, Cys-205, and Cys-208 each contribute to the Zn(2+) site.

The protein belongs to the QueC family. It depends on Zn(2+) as a cofactor.

The catalysed reaction is 7-carboxy-7-deazaguanine + NH4(+) + ATP = 7-cyano-7-deazaguanine + ADP + phosphate + H2O + H(+). Its pathway is purine metabolism; 7-cyano-7-deazaguanine biosynthesis. Catalyzes the ATP-dependent conversion of 7-carboxy-7-deazaguanine (CDG) to 7-cyano-7-deazaguanine (preQ(0)). The protein is 7-cyano-7-deazaguanine synthase of Rickettsia prowazekii (strain Madrid E).